Reading from the N-terminus, the 137-residue chain is Photosystem II reaction center W protein, chloroplastic (137 aa).

The transit peptide at 1 to 64 directs the protein to the chloroplast; that stretch reads MATITASSSA…ETTTTTNKSM (64 aa). A thylakoid-targeting transit peptide spans 65–83; the sequence is GASLLAAAAAATISNPAMA. At 84-103 the chain is on the lumenal, thylakoid side; that stretch reads LVDERMSTEGTGLPFGLSNN. Residues 104-123 form a helical membrane-spanning segment; sequence LLGWILFGVFGLIWALYFVY. Topologically, residues 124 to 137 are stromal; the sequence is ASGLEEDEESGLSL.

Part of the photosystem II complex. PSII is composed of 1 copy each of membrane proteins PsbA, PsbB, PsbC, PsbD, numerous small proteins, at least 3 peripheral proteins of the oxygen-evolving complex and a large number of cofactors. It forms dimeric complexes.

It localises to the plastid. The protein resides in the chloroplast thylakoid membrane. Functionally, stabilizes dimeric photosystem II (PSII). In its absence no dimeric PSII accumulates and there is a reduction of monomeric PSII. This Spinacia oleracea (Spinach) protein is Photosystem II reaction center W protein, chloroplastic.